The sequence spans 304 residues: MSWIERIKSNITPTRKASIPEGVWTKCDSCGQVLYRAELERNLEVCPKCDHHMRMTARNRLHSLLDEGSLVELGSELEPKDVLKFRDSKKYKDRLASAQKETGEKDALVVMKGTLYGMPVVAAAFEFAFMGGSMGSVVGARFVRAVEQALEDNCPLICFSASGGARMQEALMSLMQMAKTSAALAKMQERGLPYISVLTDPTMGGVSASFAMLGDLNIAEPKALIGFAGPRVIEQTVREKLPPGFQRSEFLIEKGAIDMIIRRPEMRLKLASILAKLMNLPAPNPEAPREGVVVPPVPDQEPEA.

Residues 23-292 (VWTKCDSCGQ…PNPEAPREGV (270 aa)) enclose the CoA carboxyltransferase N-terminal domain. Cys-27, Cys-30, Cys-46, and Cys-49 together coordinate Zn(2+). The segment at 27-49 (CDSCGQVLYRAELERNLEVCPKC) adopts a C4-type zinc-finger fold. Residues 284–304 (NPEAPREGVVVPPVPDQEPEA) are disordered. Residues 295–304 (PPVPDQEPEA) show a composition bias toward pro residues.

Belongs to the AccD/PCCB family. In terms of assembly, acetyl-CoA carboxylase is a heterohexamer composed of biotin carboxyl carrier protein (AccB), biotin carboxylase (AccC) and two subunits each of ACCase subunit alpha (AccA) and ACCase subunit beta (AccD). Zn(2+) is required as a cofactor.

It localises to the cytoplasm. The catalysed reaction is N(6)-carboxybiotinyl-L-lysyl-[protein] + acetyl-CoA = N(6)-biotinyl-L-lysyl-[protein] + malonyl-CoA. The protein operates within lipid metabolism; malonyl-CoA biosynthesis; malonyl-CoA from acetyl-CoA: step 1/1. In terms of biological role, component of the acetyl coenzyme A carboxylase (ACC) complex. Biotin carboxylase (BC) catalyzes the carboxylation of biotin on its carrier protein (BCCP) and then the CO(2) group is transferred by the transcarboxylase to acetyl-CoA to form malonyl-CoA. The chain is Acetyl-coenzyme A carboxylase carboxyl transferase subunit beta from Escherichia coli O6:K15:H31 (strain 536 / UPEC).